The chain runs to 473 residues: Exodeoxyribonuclease I (473 aa).

The region spanning Ile-9 to Ala-188 is the Exonuclease domain. 3 residues coordinate Mg(2+): Asp-11, Glu-13, and Asp-182. Glu-13 is a binding site for substrate. Positions Pro-198–Arg-353 constitute an ExoI SH3-like domain. Residues Ala-356 to Leu-472 enclose the ExoI C-terminal domain.

Monomer. Interacts with ssb (via C-terminus); this interaction stimulates the exonuclease activity by recruiting the enzyme to its substrate. It depends on Mg(2+) as a cofactor.

It carries out the reaction Exonucleolytic cleavage in the 3'- to 5'-direction to yield nucleoside 5'-phosphates.. Degrades single-stranded DNA (ssDNA) in a highly processive manner. Also functions as a DNA deoxyribophosphodiesterase that releases deoxyribose-phosphate moieties following the cleavage of DNA at an apurinic/apyrimidinic (AP) site by either an AP endonuclease or AP lyase. Involved in genome maintenance but probably not in phase variation, which contributes to the virulence and disease. The polypeptide is Exodeoxyribonuclease I (sbcB) (Haemophilus influenzae (strain ATCC 51907 / DSM 11121 / KW20 / Rd)).